A 487-amino-acid chain; its full sequence is UDP-N-acetylmuramoyl-L-alanyl-D-glutamate--2,6-diaminopimelate ligase (487 aa).

Leucine 23 and serine 25 together coordinate UDP-N-acetyl-alpha-D-muramoyl-L-alanyl-D-glutamate. 108-114 lines the ATP pocket; that stretch reads GTNGKTS. Residues 150 to 151, serine 177, glutamine 183, and arginine 185 each bind UDP-N-acetyl-alpha-D-muramoyl-L-alanyl-D-glutamate; that span reads TT. Lysine 217 carries the N6-carboxylysine modification. Residues arginine 378, 402 to 405, glycine 453, and glutamate 457 each bind meso-2,6-diaminopimelate; that span reads DNPR. The Meso-diaminopimelate recognition motif signature appears at 402-405; sequence DNPR.

This sequence belongs to the MurCDEF family. MurE subfamily. Mg(2+) serves as cofactor. Carboxylation is probably crucial for Mg(2+) binding and, consequently, for the gamma-phosphate positioning of ATP.

It is found in the cytoplasm. It carries out the reaction UDP-N-acetyl-alpha-D-muramoyl-L-alanyl-D-glutamate + meso-2,6-diaminopimelate + ATP = UDP-N-acetyl-alpha-D-muramoyl-L-alanyl-gamma-D-glutamyl-meso-2,6-diaminopimelate + ADP + phosphate + H(+). It participates in cell wall biogenesis; peptidoglycan biosynthesis. In terms of biological role, catalyzes the addition of meso-diaminopimelic acid to the nucleotide precursor UDP-N-acetylmuramoyl-L-alanyl-D-glutamate (UMAG) in the biosynthesis of bacterial cell-wall peptidoglycan. The polypeptide is UDP-N-acetylmuramoyl-L-alanyl-D-glutamate--2,6-diaminopimelate ligase (Pseudomonas aeruginosa (strain ATCC 15692 / DSM 22644 / CIP 104116 / JCM 14847 / LMG 12228 / 1C / PRS 101 / PAO1)).